A 145-amino-acid chain; its full sequence is Catabolic 3-dehydroquinase (145 aa).

Residue tyrosine 24 is the Proton acceptor of the active site. Residues asparagine 77, histidine 83, and aspartate 90 each contribute to the substrate site. The active-site Proton donor is the histidine 103. Substrate is bound by residues 104-105 (IT) and arginine 114.

The protein belongs to the type-II 3-dehydroquinase family. Homododecamer. Adopts a ring-like structure, composed of an arrangement of two hexameric rings stacked on top of one another.

It carries out the reaction 3-dehydroquinate = 3-dehydroshikimate + H2O. It participates in aromatic compound metabolism; 3,4-dihydroxybenzoate biosynthesis; 3,4-dihydroxybenzoate from 3-dehydroquinate: step 1/2. Functionally, is involved in the catabolism of quinate. Allows the utilization of quinate as carbon source via the beta-ketoadipate pathway. The polypeptide is Catabolic 3-dehydroquinase (Clavispora lusitaniae (strain ATCC 42720) (Yeast)).